We begin with the raw amino-acid sequence, 414 residues long: Nuclear hormone receptor family member nhr-213 (414 aa).

Positions 21 to 99 (IVLCKVCALS…LGMTPENVQF (79 aa)) form a DNA-binding region, nuclear receptor. 2 consecutive NR C4-type zinc fingers follow at residues 24 to 44 (CKVC…CRAC) and 62 to 82 (CKKG…CRLC). The 253-residue stretch at 162-414 (SAAKKMNSLE…DFSDPDIFDC (253 aa)) folds into the NR LBD domain.

It belongs to the nuclear hormone receptor family.

The protein localises to the nucleus. In terms of biological role, orphan nuclear receptor. The polypeptide is Nuclear hormone receptor family member nhr-213 (nhr-213) (Caenorhabditis elegans).